A 409-amino-acid polypeptide reads, in one-letter code: All trans-polyprenyl-diphosphate synthase PDSS1 (409 aa).

K128, R131, and H167 together coordinate isopentenyl diphosphate. 2 residues coordinate Mg(2+): D174 and D178. Residue R184 participates in isopentenyl diphosphate binding.

Belongs to the FPP/GGPP synthase family. Heterotetramer composed of 2 PDSS1/DPS1 and 2 PDSS2/DLP1 subunits. Requires Mg(2+) as cofactor.

The protein localises to the mitochondrion. It catalyses the reaction 7 isopentenyl diphosphate + (2E,6E)-farnesyl diphosphate = all-trans-decaprenyl diphosphate + 7 diphosphate. The enzyme catalyses 6 isopentenyl diphosphate + (2E,6E)-farnesyl diphosphate = all-trans-nonaprenyl diphosphate + 6 diphosphate. The protein operates within cofactor biosynthesis; ubiquinone biosynthesis. Heterotetrameric enzyme that catalyzes the condensation of farnesyl diphosphate (FPP), which acts as a primer, and isopentenyl diphosphate (IPP) to produce prenyl diphosphates of varying chain lengths and participates in the determination of the side chain of ubiquinone. Supplies nona and decaprenyl diphosphate, the precursors for the side chain of the isoprenoid quinones ubiquinone-9 (Q9)and ubiquinone-10 (Q10) respectively. The enzyme adds isopentenyl diphosphate molecules sequentially to farnesyl diphosphate with trans stereochemistry. The polypeptide is All trans-polyprenyl-diphosphate synthase PDSS1 (Mus musculus (Mouse)).